A 60-amino-acid polypeptide reads, in one-letter code: Ferredoxin (60 aa).

4Fe-4S ferredoxin-type domains follow at residues 2–29 (KVRVDADACIGCGVCENLCPDVFQLGDD) and 30–60 (GKAKVLQPETDLPCAKDAADSCPTGAISVEE). Residues cysteine 10, cysteine 13, and cysteine 16 each coordinate [4Fe-4S] cluster. Cysteine 20 and cysteine 43 are disulfide-bonded. Cysteine 51 lines the [4Fe-4S] cluster pocket.

In terms of assembly, monomer. [4Fe-4S] cluster is required as a cofactor.

Functionally, ferredoxins are iron-sulfur proteins that transfer electrons in a wide variety of metabolic reactions. The protein is Ferredoxin (fdx) of Thermotoga maritima (strain ATCC 43589 / DSM 3109 / JCM 10099 / NBRC 100826 / MSB8).